Reading from the N-terminus, the 295-residue chain is Probable porphobilinogen deaminase (295 aa).

An S-(dipyrrolylmethanemethyl)cysteine modification is found at cysteine 234.

This sequence belongs to the HMBS family. Dipyrromethane serves as cofactor.

The enzyme catalyses 4 porphobilinogen + H2O = hydroxymethylbilane + 4 NH4(+). Its pathway is porphyrin-containing compound metabolism; protoporphyrin-IX biosynthesis; coproporphyrinogen-III from 5-aminolevulinate: step 2/4. In terms of biological role, tetrapolymerization of the monopyrrole PBG into the hydroxymethylbilane pre-uroporphyrinogen in several discrete steps. In Thermoplasma acidophilum (strain ATCC 25905 / DSM 1728 / JCM 9062 / NBRC 15155 / AMRC-C165), this protein is Probable porphobilinogen deaminase (hemC).